Consider the following 466-residue polypeptide: Ribulose bisphosphate carboxylase large chain (466 aa).

K5 is subject to N6,N6,N6-trimethyllysine. Substrate-binding residues include N114 and T164. The active-site Proton acceptor is the K166. K168 serves as a coordination point for substrate. Mg(2+)-binding residues include K192, D194, and E195. The residue at position 192 (K192) is an N6-carboxylysine. The active-site Proton acceptor is the H285. 3 residues coordinate substrate: R286, H318, and S370.

Belongs to the RuBisCO large chain family. Type I subfamily. Heterohexadecamer of 8 large chains and 8 small chains. The cofactor is Mg(2+).

The protein localises to the plastid. It localises to the chloroplast. It carries out the reaction 2 (2R)-3-phosphoglycerate + 2 H(+) = D-ribulose 1,5-bisphosphate + CO2 + H2O. It catalyses the reaction D-ribulose 1,5-bisphosphate + O2 = 2-phosphoglycolate + (2R)-3-phosphoglycerate + 2 H(+). RuBisCO catalyzes two reactions: the carboxylation of D-ribulose 1,5-bisphosphate, the primary event in carbon dioxide fixation, as well as the oxidative fragmentation of the pentose substrate in the photorespiration process. Both reactions occur simultaneously and in competition at the same active site. This chain is Ribulose bisphosphate carboxylase large chain, found in Lobelia sp.